Here is a 282-residue protein sequence, read N- to C-terminus: Pantothenate synthetase (282 aa).

30-37 (MGYLHEGH) provides a ligand contact to ATP. The active-site Proton donor is His-37. Residue Gln-61 coordinates (R)-pantoate. Gln-61 provides a ligand contact to beta-alanine. 147–150 (GMKD) serves as a coordination point for ATP. Gln-153 contacts (R)-pantoate. Residues Val-176 and 184–187 (KSSR) each bind ATP.

It belongs to the pantothenate synthetase family. In terms of assembly, homodimer.

It is found in the cytoplasm. The enzyme catalyses (R)-pantoate + beta-alanine + ATP = (R)-pantothenate + AMP + diphosphate + H(+). Its pathway is cofactor biosynthesis; (R)-pantothenate biosynthesis; (R)-pantothenate from (R)-pantoate and beta-alanine: step 1/1. Functionally, catalyzes the condensation of pantoate with beta-alanine in an ATP-dependent reaction via a pantoyl-adenylate intermediate. In Bacillus cereus (strain B4264), this protein is Pantothenate synthetase.